The primary structure comprises 439 residues: Trigger factor (439 aa).

One can recognise a PPIase FKBP-type domain in the interval 158–233; that stretch reads GDVINIEYTI…IKEVLKRTLM (76 aa). Positions 410–439 are disordered; it reads KEISADEPVEEQKEEEEKEEAGSENSENKE. The span at 414–428 shows a compositional bias: acidic residues; sequence ADEPVEEQKEEEEKE.

It belongs to the FKBP-type PPIase family. Tig subfamily.

Its subcellular location is the cytoplasm. It catalyses the reaction [protein]-peptidylproline (omega=180) = [protein]-peptidylproline (omega=0). In terms of biological role, involved in protein export. Acts as a chaperone by maintaining the newly synthesized protein in an open conformation. Functions as a peptidyl-prolyl cis-trans isomerase. The polypeptide is Trigger factor (Kosmotoga olearia (strain ATCC BAA-1733 / DSM 21960 / TBF 19.5.1)).